The sequence spans 158 residues: NAD(P)H-quinone oxidoreductase subunit N (158 aa).

Belongs to the complex I NdhN subunit family. As to quaternary structure, NDH-1 can be composed of about 15 different subunits; different subcomplexes with different compositions have been identified which probably have different functions.

It localises to the cellular thylakoid membrane. It catalyses the reaction a plastoquinone + NADH + (n+1) H(+)(in) = a plastoquinol + NAD(+) + n H(+)(out). The catalysed reaction is a plastoquinone + NADPH + (n+1) H(+)(in) = a plastoquinol + NADP(+) + n H(+)(out). In terms of biological role, NDH-1 shuttles electrons from an unknown electron donor, via FMN and iron-sulfur (Fe-S) centers, to quinones in the respiratory and/or the photosynthetic chain. The immediate electron acceptor for the enzyme in this species is believed to be plastoquinone. Couples the redox reaction to proton translocation, and thus conserves the redox energy in a proton gradient. Cyanobacterial NDH-1 also plays a role in inorganic carbon-concentration. The sequence is that of NAD(P)H-quinone oxidoreductase subunit N from Nostoc punctiforme (strain ATCC 29133 / PCC 73102).